The following is a 356-amino-acid chain: Methionine import ATP-binding protein MetN (356 aa).

Positions 7–250 constitute an ABC transporter domain; the sequence is IKLDNIDVTF…PRESLTQDFI (244 aa). An ATP-binding site is contributed by 43–50; it reads GYSGAGKS.

This sequence belongs to the ABC transporter superfamily. Methionine importer (TC 3.A.1.24) family. In terms of assembly, the complex is composed of two ATP-binding proteins (MetN), two transmembrane proteins (MetI) and a solute-binding protein (MetQ).

The protein resides in the cell membrane. It carries out the reaction L-methionine(out) + ATP + H2O = L-methionine(in) + ADP + phosphate + H(+). The enzyme catalyses D-methionine(out) + ATP + H2O = D-methionine(in) + ADP + phosphate + H(+). In terms of biological role, part of the ABC transporter complex MetNIQ involved in methionine import. Responsible for energy coupling to the transport system. The chain is Methionine import ATP-binding protein MetN from Streptococcus agalactiae serotype Ia (strain ATCC 27591 / A909 / CDC SS700).